Consider the following 50-residue polypeptide: Peroxiredoxin-6 (50 aa).

The Thioredoxin domain maps to 1–50 (DFTPVCTTELGRLAPEFAKRVVFIFGPDKKLKLSILYPATTGRNFDEILR). Phosphothreonine is present on threonine 3. The active-site Cysteine sulfenic acid (-SOH) intermediate; for peroxidase activity is cysteine 6. Position 19 is an N6-acetyllysine (lysine 19). Aspartate 28 (for phospholipase activity) is an active-site residue.

It belongs to the peroxiredoxin family. Prx6 subfamily. In terms of assembly, homodimer. Interacts with GSTP1; mediates PRDX6 glutathionylation and regeneration. Interacts with APEX1. Interacts with STH. May interact with FAM168B. May interact with HTR2A. Post-translationally, irreversibly inactivated by overoxidation of Cys-6 to sulfinic acid (Cys-SO(2)H) and sulfonic acid (Cys-SO(3)H) forms upon oxidative stress. In terms of processing, phosphorylation at Thr-177 by MAP kinases increases the phospholipase activity of the enzyme. The phosphorylated form exhibits a greater lysophosphatidylcholine acyltransferase activity compared to the non-phosphorylated form.

It localises to the cytoplasm. The protein localises to the lysosome. The enzyme catalyses a hydroperoxide + 2 glutathione = an alcohol + glutathione disulfide + H2O. It catalyses the reaction a 1,2-diacyl-sn-glycero-3-phosphocholine + H2O = a 1-acyl-sn-glycero-3-phosphocholine + a fatty acid + H(+). The catalysed reaction is a 1-acyl-sn-glycero-3-phosphocholine + an acyl-CoA = a 1,2-diacyl-sn-glycero-3-phosphocholine + CoA. It carries out the reaction 1-hexadecanoyl-sn-glycero-3-phosphocholine + hexadecanoyl-CoA = 1,2-dihexadecanoyl-sn-glycero-3-phosphocholine + CoA. The enzyme catalyses 1,2-dihexadecanoyl-sn-glycero-3-phosphocholine + H2O = 1-hexadecanoyl-sn-glycero-3-phosphocholine + hexadecanoate + H(+). Its function is as follows. Thiol-specific peroxidase that catalyzes the reduction of hydrogen peroxide and organic hydroperoxides to water and alcohols, respectively. Can reduce H(2)O(2) and short chain organic, fatty acid, and phospholipid hydroperoxides. Also has phospholipase activity, and can therefore either reduce the oxidized sn-2 fatty acyl group of phospholipids (peroxidase activity) or hydrolyze the sn-2 ester bond of phospholipids (phospholipase activity). These activities are dependent on binding to phospholipids at acidic pH and to oxidized phospholipds at cytosolic pH. Plays a role in cell protection against oxidative stress by detoxifying peroxides and in phospholipid homeostasis. Exhibits acyl-CoA-dependent lysophospholipid acyltransferase which mediates the conversion of lysophosphatidylcholine (1-acyl-sn-glycero-3-phosphocholine or LPC) into phosphatidylcholine (1,2-diacyl-sn-glycero-3-phosphocholine or PC). Shows a clear preference for LPC as the lysophospholipid and for palmitoyl CoA as the fatty acyl substrate. The chain is Peroxiredoxin-6 from Mesocricetus auratus (Golden hamster).